Here is a 569-residue protein sequence, read N- to C-terminus: Urease subunit alpha (569 aa).

The region spanning 131–569 (GGMDAHIHYI…LPMAQRYFLF (439 aa)) is the Urease domain. Ni(2+) is bound by residues H136, H138, and K218. N6-carboxylysine is present on K218. H220 is a substrate binding site. Ni(2+)-binding residues include H247 and H273. H321 serves as the catalytic Proton donor. D361 is a binding site for Ni(2+).

The protein belongs to the metallo-dependent hydrolases superfamily. Urease alpha subunit family. As to quaternary structure, heterotrimer of UreA (gamma), UreB (beta) and UreC (alpha) subunits. Three heterotrimers associate to form the active enzyme. Requires Ni cation as cofactor. Post-translationally, carboxylation allows a single lysine to coordinate two nickel ions.

The protein localises to the cytoplasm. The catalysed reaction is urea + 2 H2O + H(+) = hydrogencarbonate + 2 NH4(+). The protein operates within nitrogen metabolism; urea degradation; CO(2) and NH(3) from urea (urease route): step 1/1. This Agrobacterium fabrum (strain C58 / ATCC 33970) (Agrobacterium tumefaciens (strain C58)) protein is Urease subunit alpha.